The following is a 297-amino-acid chain: Phosphatidylglycerol--prolipoprotein diacylglyceryl transferase (297 aa).

Helical transmembrane passes span 20-40, 57-77, 107-127, and 133-153; these read FITI…GLFI, EILP…YVIF, WEGG…IIFF, and IHLK…QSIG. Arg154 is an a 1,2-diacyl-sn-glycero-3-phospho-(1'-sn-glycerol) binding site. The next 3 membrane-spanning stretches (helical) occupy residues 193–213, 225–245, and 266–286; these read PTFL…ILIF, GFIS…IEGL, and AQFI…FLRL.

Belongs to the Lgt family.

It is found in the cell inner membrane. The catalysed reaction is L-cysteinyl-[prolipoprotein] + a 1,2-diacyl-sn-glycero-3-phospho-(1'-sn-glycerol) = an S-1,2-diacyl-sn-glyceryl-L-cysteinyl-[prolipoprotein] + sn-glycerol 1-phosphate + H(+). Its pathway is protein modification; lipoprotein biosynthesis (diacylglyceryl transfer). In terms of biological role, catalyzes the transfer of the diacylglyceryl group from phosphatidylglycerol to the sulfhydryl group of the N-terminal cysteine of a prolipoprotein, the first step in the formation of mature lipoproteins. This Prochlorococcus marinus (strain MIT 9301) protein is Phosphatidylglycerol--prolipoprotein diacylglyceryl transferase.